A 147-amino-acid polypeptide reads, in one-letter code: 3-dehydroquinate dehydratase 1 (147 aa).

The active-site Proton acceptor is the tyrosine 23. Substrate contacts are provided by asparagine 75, histidine 81, and aspartate 88. Histidine 101 (proton donor) is an active-site residue. Substrate contacts are provided by residues 102–103 (LS) and arginine 112.

Belongs to the type-II 3-dehydroquinase family. As to quaternary structure, homododecamer.

It catalyses the reaction 3-dehydroquinate = 3-dehydroshikimate + H2O. It functions in the pathway metabolic intermediate biosynthesis; chorismate biosynthesis; chorismate from D-erythrose 4-phosphate and phosphoenolpyruvate: step 3/7. Its function is as follows. Catalyzes a trans-dehydration via an enolate intermediate. The chain is 3-dehydroquinate dehydratase 1 (aroQ1) from Pseudomonas aeruginosa (strain ATCC 15692 / DSM 22644 / CIP 104116 / JCM 14847 / LMG 12228 / 1C / PRS 101 / PAO1).